Here is a 131-residue protein sequence, read N- to C-terminus: Small ribosomal subunit protein uS12 (131 aa).

Residue D89 is modified to 3-methylthioaspartic acid.

The protein belongs to the universal ribosomal protein uS12 family. In terms of assembly, part of the 30S ribosomal subunit. Contacts proteins S8 and S17. May interact with IF1 in the 30S initiation complex.

Its function is as follows. With S4 and S5 plays an important role in translational accuracy. Functionally, interacts with and stabilizes bases of the 16S rRNA that are involved in tRNA selection in the A site and with the mRNA backbone. Located at the interface of the 30S and 50S subunits, it traverses the body of the 30S subunit contacting proteins on the other side and probably holding the rRNA structure together. The combined cluster of proteins S8, S12 and S17 appears to hold together the shoulder and platform of the 30S subunit. This chain is Small ribosomal subunit protein uS12, found in Campylobacter concisus (strain 13826).